We begin with the raw amino-acid sequence, 354 residues long: Glyceraldehyde-3-phosphate dehydrogenase (354 aa).

NAD(+)-binding positions include Thr-11–Ile-12 and Gly-108. Ser-137 to Asn-139 provides a ligand contact to D-glyceraldehyde 3-phosphate. Catalysis depends on Cys-138, which acts as the Nucleophile. Arg-166 provides a ligand contact to NAD(+). Position 192–193 (His-192–Gly-193) interacts with D-glyceraldehyde 3-phosphate. NAD(+) is bound at residue Gln-299.

The protein belongs to the glyceraldehyde-3-phosphate dehydrogenase family. Homotetramer.

It is found in the cytoplasm. The catalysed reaction is D-glyceraldehyde 3-phosphate + phosphate + NADP(+) = (2R)-3-phospho-glyceroyl phosphate + NADPH + H(+). It carries out the reaction D-glyceraldehyde 3-phosphate + phosphate + NAD(+) = (2R)-3-phospho-glyceroyl phosphate + NADH + H(+). It participates in carbohydrate degradation; glycolysis; pyruvate from D-glyceraldehyde 3-phosphate: step 1/5. This is Glyceraldehyde-3-phosphate dehydrogenase from Haloarcula marismortui (strain ATCC 43049 / DSM 3752 / JCM 8966 / VKM B-1809) (Halobacterium marismortui).